The following is a 1322-amino-acid chain: MEILRGSPALSEFRVNKLLERCRELDLPVSGIYAEFMHFADVSAPLNSDEQSKLASLLTYGPTIAEHEPTGTMLLVTPRPGTISPWSSKSTDIAQNCALGNVKRLERGTAYYVEVTADLTNAQLTDLKALIHDRMMEVVFTDVDSAAALFTQAEPAPVQSVDILVGGRKALEDANLKLGLALAEDEIDYLVENFTMLGRNPNDIELMMFAQANSEHCRHKIFNADWTIDGVEQEKSLFKMIKNTYEKNHEHVLSAYKDNAAVMEGSEVGRFFPNPESRQYNYHQEAAHILMKVETHNHPTAISPWPGASTGSGGEIRDEGATGLGGKPKAGLVGFTVSNLRVPGFEQPWETDFGKPGRIVNALEIMLEGPLGGAAFNNEFGRPNLLGYFRTYEEKVTSHNGEEIRGYHKPIMIAGGMGNIRADHVQKKEIPVGAKLIVLGGPAMNIGLGGGAASSMASGQSAEDLDFASVQRENPEMERRCQEVIDRCWQMGDANPIAFIHDVGAGGISNALPELVDDGERGGKFQLRNVPNDEPGMSPLEIWCNESQERYVMAVAPENLAVFEAICKRERAPFAVVGEATEERHLTLEDEHFDNTPIDMPMDILLGKAPKMHRDAKTLKVEGQAIDRSGIELEAATQRVLRLPAVAEKTFLITIGDRSVTGLVARDQMVGPWQVPVANCAVTAASYDTYHGEAMSMGERTPVALLDFGASARLAVGEAITNIASADIGDMKRINLSANWMSPAGHPGEDAGLYEAVKAVGEELCPALGLTIPVGKDSMSMKTKWEQDGEQKEVTSPLSLVITAFGRVEDVRKTVTPQLRTDKGESSLILIDLGCGQNRLGATALAQVYKQLGDKPADVDNPELLKGFFYAVQALVRDEKVLAYHDRGDGGLYVTLAEMAFAGHTGVEVDINTSESDACDDVLAMLFNEELGAVLQVRTEDLDTVKSVLAEHGLTACSHVIGTVVDEDVVRIWNGNDRVLEQSRTDLRTVWAETTYQMQAMRDNPAGALQEFEAKKDNSDPGLSAQLTFDINEDVAAPFIAAPFITKAPKTGASVVNAPAINLGAKPQMAILREQGVNSHVEMAAAFDRAGFEATDVHMSDILSGNVQLEGFNGLVACGGFSYGDVLGAGEGWAKSVLFNNIARDQFEAFFKRNDTFSLGVCNGCQMMSNLSELIPGSDLWPRFVRNESERFEARFSLVEVQKSDSLFFNEMAGSRMPIAVSHGEGRVEVRNGEHLNAIEQSGTVALRYLDNFGNVTQNYPANPNGSPNGITGLTTMDGRVTIMMPHPERVFRTVANSWHPDDWNENSPWMRMFRNARVNLG.

ATP is bound by residues 307–318 (GASTGSGGEIRD) and Ala678. Mg(2+) is bound by residues Glu718, Asn722, and Asp886. In terms of domain architecture, Glutamine amidotransferase type-1 spans 1069 to 1322 (MAILREQGVN…MFRNARVNLG (254 aa)). Cys1162 acts as the Nucleophile in catalysis. Active-site residues include His1287 and Glu1289.

In the N-terminal section; belongs to the FGAMS family. As to quaternary structure, monomer.

It localises to the cytoplasm. The enzyme catalyses N(2)-formyl-N(1)-(5-phospho-beta-D-ribosyl)glycinamide + L-glutamine + ATP + H2O = 2-formamido-N(1)-(5-O-phospho-beta-D-ribosyl)acetamidine + L-glutamate + ADP + phosphate + H(+). The protein operates within purine metabolism; IMP biosynthesis via de novo pathway; 5-amino-1-(5-phospho-D-ribosyl)imidazole from N(2)-formyl-N(1)-(5-phospho-D-ribosyl)glycinamide: step 1/2. Phosphoribosylformylglycinamidine synthase involved in the purines biosynthetic pathway. Catalyzes the ATP-dependent conversion of formylglycinamide ribonucleotide (FGAR) and glutamine to yield formylglycinamidine ribonucleotide (FGAM) and glutamate. This Photobacterium profundum (strain SS9) protein is Phosphoribosylformylglycinamidine synthase.